A 578-amino-acid polypeptide reads, in one-letter code: Hemolysin 4 (578 aa).

Residues 289-322 are disordered; sequence KDGPKASWRRRPSSASSVTMPTTPRIIGSNARPE. The Ricin B-type lectin domain maps to 448–539; that stretch reads RPVNLQLGGF…LSNLSAHQLL (92 aa).

Belongs to the HlyA hemolysin family.

Its function is as follows. Bacterial hemolysins are exotoxins that attack blood cell membranes and cause cell rupture by mechanisms not clearly defined. The protein is Hemolysin 4 (ash4) of Aeromonas salmonicida.